The following is a 176-amino-acid chain: MTTILSVRLNKQVVIGGDGQATLGNTIIKSNVKKVRTLYNNKVIAGFAGGTADAFTLFELFEKKLLMYQGQLQRSAIELAKDWRTDKILRKLEALLAVADKETSLIVTGNGDVIQPENNLMAIGSGGSYAQAAAIAMIENTSLTAKQIVEKALKITSGICIYTNNIFTIKELTSEK.

Threonine 2 is an active-site residue. Na(+)-binding residues include serine 157, cysteine 160, and threonine 163.

Belongs to the peptidase T1B family. HslV subfamily. A double ring-shaped homohexamer of HslV is capped on each side by a ring-shaped HslU homohexamer. The assembly of the HslU/HslV complex is dependent on binding of ATP.

It localises to the cytoplasm. The enzyme catalyses ATP-dependent cleavage of peptide bonds with broad specificity.. Allosterically activated by HslU binding. Its function is as follows. Protease subunit of a proteasome-like degradation complex believed to be a general protein degrading machinery. The polypeptide is ATP-dependent protease subunit HslV (Buchnera aphidicola subsp. Baizongia pistaciae (strain Bp)).